Here is a 205-residue protein sequence, read N- to C-terminus: High frequency lysogenization protein HflD homolog (205 aa).

It belongs to the HflD family.

The protein localises to the cytoplasm. It is found in the cell inner membrane. The polypeptide is High frequency lysogenization protein HflD homolog (Shewanella baltica (strain OS155 / ATCC BAA-1091)).